A 546-amino-acid polypeptide reads, in one-letter code: Probable protein kinase UbiB (546 aa).

The Protein kinase domain occupies 124–502 (DFEIKPLASA…HVRQGQSRYF (379 aa)). ATP-binding positions include 130 to 138 (LASASIAQV) and Lys-153. Asp-288 (proton acceptor) is an active-site residue. Transmembrane regions (helical) follow at residues 501 to 521 (YFLG…VSRP) and 522 to 542 (EWGL…FVGW).

Belongs to the ABC1 family. UbiB subfamily.

The protein resides in the cell inner membrane. Its pathway is cofactor biosynthesis; ubiquinone biosynthesis [regulation]. Functionally, is probably a protein kinase regulator of UbiI activity which is involved in aerobic coenzyme Q (ubiquinone) biosynthesis. This is Probable protein kinase UbiB from Escherichia coli O127:H6 (strain E2348/69 / EPEC).